The sequence spans 451 residues: Serine--tRNA ligase, cytoplasmic (451 aa).

C213 and C244 are joined by a disulfide. Residue 238–240 (TAE) participates in L-serine binding. ATP is bound by residues 269 to 271 (RKE) and V285. Position 292 (E292) interacts with L-serine. 358–361 (ELVS) contributes to the ATP binding site. Residue T396 participates in L-serine binding.

The protein belongs to the class-II aminoacyl-tRNA synthetase family. Type-1 seryl-tRNA synthetase subfamily. As to quaternary structure, homodimer. The tRNA molecule binds across the dimer.

The protein resides in the cytoplasm. It is found in the cytosol. The catalysed reaction is tRNA(Ser) + L-serine + ATP = L-seryl-tRNA(Ser) + AMP + diphosphate + H(+). Functionally, catalyzes the attachment of serine to tRNA(Ser) in a two-step reaction: serine is first activated by ATP to form Ser-AMP and then transferred to the acceptor end of tRNA(Ser). This Arabidopsis thaliana (Mouse-ear cress) protein is Serine--tRNA ligase, cytoplasmic.